A 159-amino-acid chain; its full sequence is Large ribosomal subunit protein uL15 (159 aa).

A compositionally biased stretch (basic and acidic residues) spans 1–18 (MKLNEIKDNEGSSKDRIR). Residues 1–39 (MKLNEIKDNEGSSKDRIRVGRGIGSGKGKTGGRGVKGQK) are disordered. Residues 21 to 35 (RGIGSGKGKTGGRGV) are compositionally biased toward gly residues.

Belongs to the universal ribosomal protein uL15 family. As to quaternary structure, part of the 50S ribosomal subunit.

Binds to the 23S rRNA. The protein is Large ribosomal subunit protein uL15 of Allorhizobium ampelinum (strain ATCC BAA-846 / DSM 112012 / S4) (Agrobacterium vitis (strain S4)).